Consider the following 292-residue polypeptide: Fat storage-inducing transmembrane protein 1 (292 aa).

Residues 1–18 (MERGPTVGAGLGAGTRVR) are Lumenal-facing. A helical membrane pass occupies residues 19–39 (ALLGCLVKVLLWVASALLYFG). The Cytoplasmic segment spans residues 40-54 (SEQAARLLGSPCLRR). A helical membrane pass occupies residues 55-75 (LYHAWLAAVVIFGPLLQFHVN). Residues 76-94 (SRTIFASHGNFFNIKFVNS) are Lumenal-facing. The chain crosses the membrane as a helical span at residues 95 to 115 (AWGWTCTFLGGFVLLVVFLAT). Residues 116-141 (RRVAVTARHLSRLVVGAAVWRGAGRA) are Cytoplasmic-facing. Residues 142–162 (FLLIEDLTGSCFEPLPQGLLL) traverse the membrane as a helical segment. Over 163-187 (HELPDRKSCLAAGHQWRGYTVSSHT) the chain is Lumenal. Residue His-186 is part of the active site. A helical transmembrane segment spans residues 188–208 (FLLTFCCLLMAEEAAVFAKYL). Over 209 to 220 (AHGLPAGAPLRL) the chain is Cytoplasmic. A helical transmembrane segment spans residues 221 to 241 (VFLLNVLLLGLWNFLLLCTVI). At 242–249 (YFHQYTHK) the chain is on the lumenal side. The active site involves His-244. Residues 250 to 270 (VVGAAVGTFAWYLTYGSWYHQ) traverse the membrane as a helical segment. The Cytoplasmic portion of the chain corresponds to 271–292 (PWSPGIPGHGLFPRSRSMRKHN).

This sequence belongs to the FIT family. FIT1 subfamily. In terms of tissue distribution, predominantly expressed in skeletal muscle and at lower levels in the heart (at protein level). In the heart, mRNA expression levels do not correlate well with protein levels, suggesting post-transcriptional regulation in this organ.

It is found in the endoplasmic reticulum membrane. In terms of biological role, plays an important role in the formation of lipid droplets (LDs) which are storage organelles at the center of lipid and energy homeostasis. Directly binds to diacylglycerol (DAGs) and triacylglycerol. The sequence is that of Fat storage-inducing transmembrane protein 1 from Mus musculus (Mouse).